The primary structure comprises 305 residues: MSNALPLDEWVETARQCKYLPENDLKKLCERVKELLLEESNVQPVRSPVTICGDIHGQFYDLLELFKTGGEVPDTNYVFMGDFVDRGYYSLETFTYLLALKARYPDKITLLRGNHESRQITQVYGFYDECQQKYGNVNAWKYCTSVFDFLTLAAIIDGKVLCVHGGLSPKVRTLDQIRIISRNLEIPHEGPFCDLMWSDPEDIEQWQPSPRGAGWLFGSKVTAEFEHINGLNLICRAHQLVQEGYRYMFDNSLVTVWSAPNYCYRCGNVASILSLNENLDRDFKIFQAVQEERNIPTRPTMQYFF.

Mn(2+) contacts are provided by aspartate 54, histidine 56, aspartate 82, and asparagine 114. The active-site Proton donor is the histidine 115. Residues histidine 164 and histidine 238 each coordinate Mn(2+).

The protein belongs to the PPP phosphatase family. PP-6 (PP-V) subfamily. Mn(2+) serves as cofactor.

The enzyme catalyses O-phospho-L-seryl-[protein] + H2O = L-seryl-[protein] + phosphate. It carries out the reaction O-phospho-L-threonyl-[protein] + H2O = L-threonyl-[protein] + phosphate. The protein is Serine/threonine-protein phosphatase 6 catalytic subunit (ppp6c) of Dictyostelium discoideum (Social amoeba).